The primary structure comprises 265 residues: Vegetative storage protein 2 (265 aa).

An N-terminal signal peptide occupies residues 1 to 18; the sequence is MKILSLSLLLLLAATVSA. Residues Asn110, Asn188, and Asn210 are each glycosylated (N-linked (GlcNAc...) asparagine).

This sequence belongs to the APS1/VSP family. As to expression, highly expressed in flowers, but also found in leaves, vegetative shoots, petioles, peduncles, and receptacles of floral organs.

In terms of biological role, may function as somatic storage protein during early seedling development. The sequence is that of Vegetative storage protein 2 (VSP2) from Arabidopsis thaliana (Mouse-ear cress).